We begin with the raw amino-acid sequence, 204 residues long: Urease accessory protein UreG (204 aa).

Residue 11–18 (GPVGAGKT) participates in GTP binding.

The protein belongs to the SIMIBI class G3E GTPase family. UreG subfamily. As to quaternary structure, homodimer. UreD, UreF and UreG form a complex that acts as a GTP-hydrolysis-dependent molecular chaperone, activating the urease apoprotein by helping to assemble the nickel containing metallocenter of UreC. The UreE protein probably delivers the nickel.

The protein localises to the cytoplasm. In terms of biological role, facilitates the functional incorporation of the urease nickel metallocenter. This process requires GTP hydrolysis, probably effectuated by UreG. The polypeptide is Urease accessory protein UreG (Staphylococcus epidermidis (strain ATCC 12228 / FDA PCI 1200)).